The chain runs to 260 residues: ATP-dependent zinc metalloprotease FTSH, chloroplastic (260 aa).

Histidine 219 contacts Zn(2+). Glutamate 220 is a catalytic residue. Position 223 (histidine 223) interacts with Zn(2+).

It in the N-terminal section; belongs to the AAA ATPase family. In the C-terminal section; belongs to the peptidase M41 family. Requires Zn(2+) as cofactor.

It is found in the plastid. The protein localises to the chloroplast thylakoid membrane. Functionally, probable ATP-dependent zinc metallopeptidase. The chain is ATP-dependent zinc metalloprotease FTSH, chloroplastic from Helianthus annuus (Common sunflower).